Consider the following 170-residue polypeptide: Protein SOB FIVE-LIKE 5 (170 aa).

Positions 10–15 (SGWTLY) match the SOFL-A motif. The tract at residues 17-78 (DQSVSSPSPS…GPRNISEEDS (62 aa)) is disordered. The span at 35–44 (DSRRRSKDSW) shows a compositional bias: basic and acidic residues. The short motif at 61-70 (SMISDASSGP) is the SOFL-B element. The short motif at 79-86 (VKKINIVG) is the Nuclear localization signal element.

This sequence belongs to the SOFL plant protein family. As to expression, expressed in seedlings, roots, flowers and siliques. Barely detectable in leaves.

Its subcellular location is the cytoplasm. It is found in the nucleus. Its function is as follows. Involved in cytokinin-mediated development. This chain is Protein SOB FIVE-LIKE 5, found in Arabidopsis thaliana (Mouse-ear cress).